A 1386-amino-acid polypeptide reads, in one-letter code: Lysophospholipase NTE1 (1386 aa).

Residues 1–19 (MGPEFEDSIPLVHSDNRTT) lie on the Cytoplasmic side of the membrane. Residues 20 to 40 (TIYSVYIIISDIFSFVQWLLF) traverse the membrane as a helical segment. Topologically, residues 41-65 (KVLNLIIIDSPAFVLRLLSKNFEIN) are lumenal. The helical transmembrane segment at 66–86 (LHLSSILATLIGVSVVTYLVI) threads the bilayer. At 87 to 1386 (RYKFLTGYSH…KKILYRRNSI (1300 aa)) the chain is on the cytoplasmic side. The tract at residues 394-416 (EAEAENLPKKLKHHHRNQLQRTT) is disordered. Basic residues predominate over residues 402 to 411 (KKLKHHHRNQ). A nucleoside 3',5'-cyclic phosphate contacts are provided by residues 577 to 701 (KRLL…LKNL) and 697 to 821 (KLKN…VASK). A PNPLA domain is found at 1081 to 1245 (LVLGGGGSRG…LDNLPVNEMK (165 aa)). A GXGXXG motif is present at residues 1085-1090 (GGGSRG). The GXSXG signature appears at 1112 to 1116 (GTSIG). Ser1114 acts as the Nucleophile in catalysis. The active-site Proton acceptor is Asp1232. The short motif at 1232–1234 (DGG) is the DGA/G element.

This sequence belongs to the NTE family.

The protein localises to the endoplasmic reticulum membrane. The catalysed reaction is a 1-acyl-sn-glycero-3-phosphocholine + H2O = sn-glycerol 3-phosphocholine + a fatty acid + H(+). Inhibited by organophosphorus esters. Intracellular phospholipase B that catalyzes the double deacylation of phosphatidylcholine (PC) to glycerophosphocholine (GroPCho). Plays an important role in membrane lipid homeostasis. Responsible for the rapid PC turnover in response to inositol, elevated temperatures, or when choline is present in the growth medium. In Candida albicans (strain SC5314 / ATCC MYA-2876) (Yeast), this protein is Lysophospholipase NTE1 (NTE1).